The sequence spans 1396 residues: ATP-binding cassette transporter pdr1 (1396 aa).

The disordered stretch occupies residues 1–22 (MSEQEKGKGDLDDPNSKNTKCP). The ABC transporter 1 domain maps to 73 to 320 (LHPINIIFRT…FLDLGFIPAK (248 aa)). One can recognise an ABC transmembrane type-2 1 domain in the interval 412 to 622 (LQVFATAKVT…GYESIMLNEF (211 aa)). Helical transmembrane passes span 431-451 (YIAT…SLFY), 466-486 (VLSN…DIIF), 512-532 (LVEF…VYFL), 543-563 (FIFY…FRFI), 572-592 (IAAL…GAVM), and 680-700 (GIIL…ANFI). The region spanning 758–1001 (LCWRDLNFTV…LVNYFKRIHG (244 aa)) is the ABC transporter 2 domain. 794–801 (GENKSGKS) contributes to the ATP binding site. Positions 1071–1286 (FQIYKISMRN…FLEGMIGGVL (216 aa)) constitute an ABC transmembrane type-2 2 domain. 5 helical membrane passes run 1095 to 1115 (VAFN…QGVG), 1166 to 1186 (FIIA…TLFF), 1208 to 1228 (FAWL…IGIA), 1245 to 1265 (FVFI…VGFW), and 1361 to 1381 (CIMI…YYII).

The protein belongs to the ABC transporter superfamily. ABCG family. PDR (TC 3.A.1.205) subfamily.

It localises to the endoplasmic reticulum membrane. In Schizosaccharomyces pombe (strain 972 / ATCC 24843) (Fission yeast), this protein is ATP-binding cassette transporter pdr1 (pdr1).